We begin with the raw amino-acid sequence, 325 residues long: Olfactory receptor 1S1 (325 aa).

The Extracellular segment spans residues 1–38 (MKTFSSFLQIGRNMHQGNQTTITEFILLGFFKQDEHQN). N-linked (GlcNAc...) asparagine glycosylation occurs at Asn-18. A helical membrane pass occupies residues 39-62 (LLFVLFLGMYLVTVIGNGLIIVAI). Residues 63-70 (SLDTYLHT) lie on the Cytoplasmic side of the membrane. A helical transmembrane segment spans residues 71 to 92 (PMYLFLANLSFADISSISNSVP). Over 93–113 (KMLVNIQTKSQSISYESCITQ) the chain is Extracellular. A disulfide bridge connects residues Cys-110 and Cys-202. A helical membrane pass occupies residues 114 to 133 (MYFSIVFVVIDNLLLGTMAY). Topologically, residues 134–152 (DHFVAICHPLNYTILMRPR) are cytoplasmic. The chain crosses the membrane as a helical span at residues 153–171 (FGILLTVISWFLSNIIALT). Residues 172 to 208 (HTLLLIQLLFCNHNTLPHFFCDLAPLLKLSCSDTLIN) lie on the Extracellular side of the membrane. Residues 209–232 (ELVLFIVGLSVIIFPFTLSFFSYV) form a helical membrane-spanning segment. At 233–249 (CIIRAVLRVSSTQGKWK) the chain is on the cytoplasmic side. A helical membrane pass occupies residues 250–272 (AFSTCGSHLTVVLLFYGTIVGVY). At 273 to 285 (FFPSSTHPEDTDK) the chain is on the extracellular side. A helical membrane pass occupies residues 286–305 (IGAVLFTVVTPMINPFIYSL). At 306–325 (RNKDMKGALRKLINRKISSL) the chain is on the cytoplasmic side.

Belongs to the G-protein coupled receptor 1 family.

Its subcellular location is the cell membrane. Functionally, odorant receptor. The sequence is that of Olfactory receptor 1S1 (OR1S1) from Homo sapiens (Human).